Reading from the N-terminus, the 447-residue chain is Chitobiosyldiphosphodolichol beta-mannosyltransferase (447 aa).

The Lumenal portion of the chain corresponds to 1-8 (MSVFGFDN). A helical membrane pass occupies residues 9–29 (IPTWLWWLLAIYLATPFVLYV). At 30 to 127 (VQPYLFYEGK…LCSMFWKLRA (98 aa)) the chain is on the cytoplasmic side. The helical intramembrane region spans 128–148 (VDYILLQNPPTIPILPIAVVV). At 149 to 447 (KTFSRAKLII…ALSELKIIHK (299 aa)) the chain is on the lumenal side.

Belongs to the glycosyltransferase group 1 family.

Its subcellular location is the endoplasmic reticulum membrane. It catalyses the reaction an N,N'-diacetylchitobiosyl-diphospho-di-trans,poly-cis-dolichol + GDP-alpha-D-mannose = a beta-D-Man-(1-&gt;4)-beta-D-GlcNAc-(1-&gt;4)-alpha-D-GlcNAc-diphospho-di-trans,poly-cis-dolichol + GDP + H(+). Its pathway is protein modification; protein glycosylation. In terms of biological role, participates in the formation of the lipid-linked precursor oligosaccharide for N-glycosylation. Involved in assembling the dolichol-pyrophosphate-GlcNAc(2)-Man(5) intermediate on the cytoplasmic surface of the ER. This is Chitobiosyldiphosphodolichol beta-mannosyltransferase (ALG1) from Kluyveromyces lactis (strain ATCC 8585 / CBS 2359 / DSM 70799 / NBRC 1267 / NRRL Y-1140 / WM37) (Yeast).